The sequence spans 508 residues: UTP--glucose-1-phosphate uridylyltransferase (508 aa).

S2 bears the Blocked amino end (Ser) mark. Residue S13 is modified to Phosphoserine. Residues 113–116 (LNGG), K127, Q190, and G222 contribute to the UTP site. Residue 115 to 116 (GG) coordinates substrate. K127 is a Mg(2+) binding site. Substrate contacts are provided by residues H223 and 251–253 (NID). UTP-binding residues include D253 and K396. Residue D253 coordinates Mg(2+). K396 is a catalytic residue. T426 bears the Phosphothreonine mark. S434 carries the post-translational modification Phosphoserine. The residue at position 438 (K438) is an N6-acetyllysine. Phosphoserine is present on residues S448 and S461. An oligomerization region spans residues 457 to 508 (HLTVSGDVTFGKNVSLKGTVIIIANHGDRIDIPPGAVLENKIVSGNLRILDH). The interval 502–503 (NL) is critical for end-to-end subunit interaction.

The protein belongs to the UDPGP type 1 family. Homooctamer.

It localises to the cytoplasm. It catalyses the reaction alpha-D-glucose 1-phosphate + UTP + H(+) = UDP-alpha-D-glucose + diphosphate. Its pathway is glycan biosynthesis; glycogen biosynthesis. Functionally, UTP--glucose-1-phosphate uridylyltransferase catalyzing the conversion of glucose-1-phosphate into UDP-glucose, a crucial precursor for the production of glycogen. This is UTP--glucose-1-phosphate uridylyltransferase (UGP2) from Bos taurus (Bovine).